The primary structure comprises 793 residues: Probable exo-1,4-beta-xylosidase xlnD (793 aa).

Positions 1 to 20 (MPRVASVAAVLAALLPSALG) are cleaved as a signal peptide. 3 N-linked (GlcNAc...) asparagine glycosylation sites follow: Asn-23, Asn-87, and Asn-142. Residue Asp-310 is part of the active site. N-linked (GlcNAc...) asparagine glycans are attached at residues Asn-326, Asn-385, Asn-404, Asn-440, Asn-477, Asn-518, Asn-559, Asn-614, Asn-652, Asn-679, and Asn-701.

Belongs to the glycosyl hydrolase 3 family.

The protein resides in the secreted. The catalysed reaction is Hydrolysis of (1-&gt;4)-beta-D-xylans, to remove successive D-xylose residues from the non-reducing termini.. It functions in the pathway glycan degradation; xylan degradation. Functionally, xylan 1,4-beta-xylosidase involved in the hydrolysis of xylan, a major structural heterogeneous polysaccharide found in plant biomass representing the second most abundant polysaccharide in the biosphere, after cellulose. This is Probable exo-1,4-beta-xylosidase xlnD (xlnD) from Aspergillus terreus (strain NIH 2624 / FGSC A1156).